We begin with the raw amino-acid sequence, 201 residues long: Female-specific protein transformer (201 aa).

The disordered stretch occupies residues Met-1–Arg-117. Residues Ser-9–Arg-37 are compositionally biased toward basic and acidic residues. 2 stretches are compositionally biased toward basic residues: residues Asn-38–Ser-62 and Lys-99–Thr-115.

The protein localises to the nucleus speckle. Member of the regulatory pathway controlling female somatic sexual differentiation, regulated by Sxl. Activates dsx female-specific splicing by promoting the formation of a splicing enhancer complex which consists of tra, tra2 and sr proteins. This is Female-specific protein transformer (tra) from Drosophila hydei (Fruit fly).